The chain runs to 309 residues: Short-chain dehydrogenase/reductase ARMGADRAFT_1048226 (309 aa).

NADP(+)-binding residues include Lys64, Asp86, Asn113, and Lys145. The active-site Proton donor is Ser167. NADP(+) is bound by residues Tyr196 and Lys200. Tyr196 (proton acceptor) is an active-site residue. The active-site Lowers pKa of active site Tyr is Lys200.

The protein belongs to the short-chain dehydrogenases/reductases (SDR) family.

The protein operates within secondary metabolite biosynthesis. Short-chain dehydrogenase/reductase, part of the gene cluster that mediates the biosynthesis of melleolides, a range of antifungal and phytotoxic polyketide derivatives composed of an orsellinic acid (OA) moiety esterified to various sesquiterpene alcohols. The first step in melleolides biosynthesis is performed by the delta(6)-protoilludene synthase PRO1 which catalyzes the cyclization of farnesyl diphosphate to protoilludene. The orsellinic acid synthase armB produces OA by condensing acetyl-CoA with 3 malonyl-CoA units in a three-round chain elongation reaction folowed by a C2-C7 ring closure. ArmB further catalyzes the trans-esterification of OA to the various sesquiterpene alcohols resulting from the hydroxylation of protoilludene. The melleolides cluster also includes 5 cytochrome P450 monooxygenases, 4 NAD(+)-dependent oxidoreductases, one flavin-dependent oxidoreductase, and one O-methyltransferase. The cytochrome P450 monooxygenases may be involved in protoilludene hydroxylation to elaborate melleolides with multiple alcohol groups, such as melleolide D, which carries alcohol functionalities at C-4, C-5, C-10, and C-13. The role of the NAD(+)-dependent enzymes remains unknown. Numerous melleolides, including arnamial, show 5'-O-methylation of the aromatic moiety which may be catalyzed by the methyltransferase encoded in the cluster. The flavin-dependent oxidoreductase might represent the dehydrogenase yielding the aldehyde in position 1 of arnamial and other melleolides. Finally, several halogenase localized outside of the cluster, are able to catalyze the transfer of a single chlorine atom to the melleolide backbone, resulting in a 6'-chloromelleolide product. This Armillaria gallica (Bulbous honey fungus) protein is Short-chain dehydrogenase/reductase ARMGADRAFT_1048226.